An 82-amino-acid polypeptide reads, in one-letter code: Turripeptide IX-23 (82 aa).

A signal peptide spans 1 to 23 (MMAKLMITVMMVLLLSLQQGADG). Residues 24 to 50 (RSERWRKNQMAASSIMRNLITARIDPP) constitute a propeptide that is removed on maturation. 3 disulfides stabilise this stretch: Cys-53–Cys-68, Cys-58–Cys-72, and Cys-64–Cys-79.

The protein belongs to the Pg turripeptide superfamily. Expressed by the venom duct.

It is found in the secreted. The polypeptide is Turripeptide IX-23 (Gemmula speciosa (Splendid gem-turris)).